The primary structure comprises 350 residues: Flagellar filament outer layer protein (350 aa).

A signal peptide spans 1–20; that stretch reads MKKAVVLSAVALLSGVCAVA.

As to quaternary structure, the flagellum consists of an outer layer composed of repeating units of FlaA around a core that contains several antigenically related polypeptides.

It is found in the periplasmic flagellum. The protein localises to the periplasm. Its function is as follows. Component of the outer layer of the flagella. The sequence is that of Flagellar filament outer layer protein (flaA) from Treponema pallidum (strain Nichols).